The sequence spans 324 residues: Interactor of constitutive active ROPs 4 (324 aa).

4 disordered regions span residues 1–74 (MPKP…SGLE), 91–156 (LAKA…ASKE), 175–201 (SLSE…KAKE), and 289–324 (FVGS…KGQK). Over residues 13–28 (QRQSPRLRTSLLSTSS) the composition is skewed to low complexity. Composition is skewed to basic and acidic residues over residues 29-50 (DPHH…DRRS), 95-106 (EAAKKRAQEELH), and 118-156 (PERD…ASKE). Residues 62-266 (SQKKLGSRIS…ADAAAAVLSG (205 aa)) are a coiled coil. Over residues 313–324 (MFGDLWKKKGQK) the composition is skewed to basic and acidic residues.

It belongs to the ICR family. In terms of assembly, interacts with ARAC11 in vitro.

Acts as a scaffold, mediating interaction of ROPs with different proteins. This is Interactor of constitutive active ROPs 4 (ICR4) from Arabidopsis thaliana (Mouse-ear cress).